Reading from the N-terminus, the 293-residue chain is MSLRQIAFYGKGGIGKSTTSQNTLAALVELDQKILIVGCDPKADSTRLILHAKAQDTVLHLAAEAGSVEDLELEDVLKIGYKGIKCVESGGPEPGVGCAGRGVITSINFLEENGAYDDVDYVSYDVLGDVVCGGFAMPIRENKAQEIYIVMSGEMMALYAANNIAKGILKYAHSGGVRLGGLICNERQTDKEIDLASALAARLGTQLIHFVPRDNIVQHAELRRMTVIEYAPDSQQAQEYRQLANKVHANKGKGTIPTPITMEELEEMLMDFGIMKSEEQQLAELQAKEAAKA.

Gly-10 to Ser-17 serves as a coordination point for ATP. Residue Cys-98 coordinates [4Fe-4S] cluster. Arg-101 carries the post-translational modification ADP-ribosylarginine; by dinitrogenase reductase ADP-ribosyltransferase. A [4Fe-4S] cluster-binding site is contributed by Cys-132.

The protein belongs to the NifH/BchL/ChlL family. In terms of assembly, homodimer. [4Fe-4S] cluster is required as a cofactor. Post-translationally, the reversible ADP-ribosylation of Arg-101 inactivates the nitrogenase reductase and regulates nitrogenase activity.

The catalysed reaction is N2 + 8 reduced [2Fe-2S]-[ferredoxin] + 16 ATP + 16 H2O = H2 + 8 oxidized [2Fe-2S]-[ferredoxin] + 2 NH4(+) + 16 ADP + 16 phosphate + 6 H(+). In terms of biological role, the key enzymatic reactions in nitrogen fixation are catalyzed by the nitrogenase complex, which has 2 components: the iron protein and the molybdenum-iron protein. This Azospirillum brasilense protein is Nitrogenase iron protein (nifH).